Consider the following 402-residue polypeptide: MSHRKFSAPRHGSMGFTPKKRSKRHRGKVKAFPKDDPTKPIHLTAFIAFKAGMTHIVREVDKPGSKVNKKEVVEAVTIFEAPPMVIVGIVGYIDTPRGPRQFKTVWAEHLSEDCRGRFYKNWHTSKKKAFQKHAKKWQDEDGRKSIEADLNKMKKYCSKIRVIAHTQMKVMKHREKKAHIMEIQINGGTVAEKVDWAREHLEKQVPVDSVFAQDEMIDCIGVTKGKGFKGVTSRWHTKKLPRKTHKGLRKVACIGAWHPSRVQFTVARAGQKGYHHRTEVNKKIYRLGKSCLTEEGKKNGGTDYDITEKSVNPMGGFPHYGLVNQDFVMIRGCCVGSKKRPITLRKSLIVQTKRFAHEKINLKWIDTSSKFGHGRFQTHAEKRAFMGKLKKDLIAESEAVKT.

The segment at 1-35 (MSHRKFSAPRHGSMGFTPKKRSKRHRGKVKAFPKD) is disordered. A compositionally biased stretch (basic residues) spans 18 to 31 (PKKRSKRHRGKVKA).

Belongs to the universal ribosomal protein uL3 family.

Its subcellular location is the cytoplasm. The L3 protein is a component of the large subunit of cytoplasmic ribosomes. In Toxocara canis (Canine roundworm), this protein is Large ribosomal subunit protein uL3 (RPL3).